The primary structure comprises 384 residues: Lipid-A-disaccharide synthase (384 aa).

It belongs to the LpxB family.

The catalysed reaction is 2-N,3-O-bis[(3R)-3-hydroxytetradecanoyl]-alpha-D-glucosaminyl 1-phosphate + UDP-2-N,3-O-bis[(3R)-3-hydroxytetradecanoyl]-alpha-D-glucosamine = lipid A disaccharide (E. coli) + UDP + H(+). It catalyses the reaction a lipid X + a UDP-2-N,3-O-bis[(3R)-3-hydroxyacyl]-alpha-D-glucosamine = a lipid A disaccharide + UDP + H(+). The protein operates within glycolipid biosynthesis; lipid IV(A) biosynthesis; lipid IV(A) from (3R)-3-hydroxytetradecanoyl-[acyl-carrier-protein] and UDP-N-acetyl-alpha-D-glucosamine: step 5/6. Condensation of UDP-2,3-diacylglucosamine and 2,3-diacylglucosamine-1-phosphate to form lipid A disaccharide, a precursor of lipid A, a phosphorylated glycolipid that anchors the lipopolysaccharide to the outer membrane of the cell. This is Lipid-A-disaccharide synthase from Blochmanniella floridana.